Reading from the N-terminus, the 288-residue chain is Alpha/beta hydrolase domain-containing protein 17B (288 aa).

Active-site charge relay system residues include Ser-170, Asp-235, and His-264.

The protein belongs to the AB hydrolase superfamily. ABHD17 family. Post-translationally, palmitoylated on cysteine residues located in a cysteine cluster at the N-terminus which promotes membrane localization.

It localises to the cell membrane. Its subcellular location is the recycling endosome membrane. The protein localises to the cell projection. It is found in the dendritic spine. The protein resides in the postsynaptic density membrane. It catalyses the reaction S-hexadecanoyl-L-cysteinyl-[protein] + H2O = L-cysteinyl-[protein] + hexadecanoate + H(+). In terms of biological role, hydrolyzes fatty acids from S-acylated cysteine residues in proteins. Has depalmitoylating activity towards NRAS. The polypeptide is Alpha/beta hydrolase domain-containing protein 17B (Gallus gallus (Chicken)).